The chain runs to 1014 residues: MLARAPPRRPPRLVLLRLLLLHLLLLALRARCLSAEPGQGAQTWARFARAPAPEAAGLLHDTFPDGFLWAVGSAAYQTEGGWRQHGKGASIWDTFTHHSGAAPSDSPIVVAPSGAPSPPLSSTGDVASDSYNNVYRDTEGLRELGVTHYRFSISWARVLPNGTAGTPNREGLRYYRRLLERLRELGVQPVVTLYHWDLPQRLQDTYGGWANRALADHFRDYAELCFRHFGGQVKYWITIDNPYVVAWHGYATGRLAPGVRGSSRLGYLVAHNLLLAHAKVWHLYNTSFRPTQGGRVSIALSSHWINPRRMTDYNIRECQKSLDFVLGWFAKPIFIDGDYPESMKNNLSSLLPDFTESEKRLIRGTADFFALSFGPTLSFQLLDPNMKFRQLESPNLRQLLSWIDLEYNHPPIFIVENGWFVSGTTKRDDAKYMYYLKKFIMETLKAIRLDGVDVIGYTAWSLMDGFEWHRGYSIRRGLFYVDFLSQDKELLPKSSALFYQKLIEDNGFPPLPENQPLEGTFPCDFAWGVVDNYVQVDTTLSQFTDPNVYLWDVHHSKRLIKVDGVVAKKRKPYCVDFSAIRPQITLLREMRVTHFRFSLDWALILPLGNQTQVNHTVLHFYRCMISELVHANITPVVALWQPAAPHQGLPHALAKHGAWENPHTALAFADYANLCFKELGHWVNLWITMNEPNTRNMTYRAGHHLLRAHALAWHLYDDKFRAAQKGKISIALQADWIEPACPFSQNDKEVAERVLEFDIGWLAEPIFGSGDYPRVMRDWLNQKNNFLLPYFTEDEKKLVRGSFDFLAVSHYTTILVDWEKEDPMKYNDYLEVQEMTDITWLNSPSQVAVVPWGLRKVLNWLRFKYGDLPMYVTANGIDDDPHAEQDSLRIYYIKNYVNEALKAYVLDDINLCGYFAYSLSDRSAPKSGFYRYAANQFEPKPSMKHYRKIIDSNGFLGSGTLGRFCPEEYTVCTECGFFQTRKSLLVFISFLVFTFIISLALIFHYSKKGQRSYK.

An N-terminal signal peptide occupies residues 1 to 34; it reads MLARAPPRRPPRLVLLRLLLLHLLLLALRARCLS. Residues 35–982 lie on the Extracellular side of the membrane; that stretch reads AEPGQGAQTW…TECGFFQTRK (948 aa). Glycosyl hydrolase-1 regions lie at residues 59 to 508 and 517 to 955; these read LHDT…DNGF and LEGT…SNGF. N-linked (GlcNAc...) asparagine glycosylation is found at asparagine 161, asparagine 285, asparagine 346, asparagine 609, asparagine 614, and asparagine 696. A helical transmembrane segment spans residues 983-1003; the sequence is SLLVFISFLVFTFIISLALIF. The Cytoplasmic segment spans residues 1004–1014; the sequence is HYSKKGQRSYK.

The protein belongs to the glycosyl hydrolase 1 family. Klotho subfamily. In terms of assembly, homodimer. Interacts with FGF23 and FGFR1. N-glycosylated. In terms of tissue distribution, membrane-bound protein is present in distal renal tubules, inner ear, ependymal cells of brain choroid plexus, elongating spermatids and mature oocytes (at protein level). Soluble peptide is present in serum (100 pM) and cerebrospinal fluid. Expressed strongly in kidney, moderately in brain choroid plexus, and at low levels in pituitary, placenta, skeletal muscle, urinary bladder, aorta, pancreas, testis, ovary, colon, thyroid gland and adipocytes.

It is found in the cell membrane. The protein localises to the apical cell membrane. It localises to the secreted. It catalyses the reaction a beta-D-glucuronoside + H2O = D-glucuronate + an alcohol. Inhibited by D-saccharic acid 1,4-lactone and taurocholic acid. May have weak glycosidase activity towards glucuronylated steroids. However, it lacks essential active site Glu residues at positions 241 and 874, suggesting it may be inactive as a glycosidase in vivo. May be involved in the regulation of calcium and phosphorus homeostasis by inhibiting the synthesis of active vitamin D. Essential factor for the specific interaction between FGF23 and FGFR1. Its function is as follows. The Klotho peptide generated by cleavage of the membrane-bound isoform may be an anti-aging circulating hormone which would extend life span by inhibiting insulin/IGF1 signaling. In Mus musculus (Mouse), this protein is Klotho (Kl).